We begin with the raw amino-acid sequence, 309 residues long: Pseudouridine-5'-phosphate glycosidase 2 (309 aa).

Glu26 functions as the Proton donor in the catalytic mechanism. Residues Lys87 and Val107 each contribute to the substrate site. Residue Asp139 coordinates Mn(2+). 141–143 contributes to the substrate binding site; the sequence is SAD. The active-site Nucleophile is Lys160.

This sequence belongs to the pseudouridine-5'-phosphate glycosidase family. In terms of assembly, homotrimer. Mn(2+) is required as a cofactor.

It carries out the reaction D-ribose 5-phosphate + uracil = psi-UMP + H2O. In terms of biological role, catalyzes the reversible cleavage of pseudouridine 5'-phosphate (PsiMP) to ribose 5-phosphate and uracil. Functions biologically in the cleavage direction, as part of a pseudouridine degradation pathway. The protein is Pseudouridine-5'-phosphate glycosidase 2 of Rhizobium johnstonii (strain DSM 114642 / LMG 32736 / 3841) (Rhizobium leguminosarum bv. viciae).